A 369-amino-acid polypeptide reads, in one-letter code: Mitogen-activated protein kinase 11 (369 aa).

The region spanning 40 to 326 (VPPLRPIGRG…VDEALCHPYL (287 aa)) is the Protein kinase domain. Residues 46–54 (IGRGASGIV) and Lys69 each bind ATP. Asp166 serves as the catalytic Proton acceptor. At Thr198 the chain carries Phosphothreonine. Positions 198-200 (TEY) match the TXY motif. Tyr200 is subject to Phosphotyrosine. Thr203 is subject to Phosphothreonine.

The protein belongs to the protein kinase superfamily. CMGC Ser/Thr protein kinase family. MAP kinase subfamily. As to quaternary structure, interacts with MKK1, MKK2 and MKK6. Dually phosphorylated on Thr-198 and Tyr-200, which activates the enzyme.

The catalysed reaction is L-seryl-[protein] + ATP = O-phospho-L-seryl-[protein] + ADP + H(+). It catalyses the reaction L-threonyl-[protein] + ATP = O-phospho-L-threonyl-[protein] + ADP + H(+). Activated by threonine and tyrosine phosphorylation. In Arabidopsis thaliana (Mouse-ear cress), this protein is Mitogen-activated protein kinase 11 (MPK11).